The following is a 376-amino-acid chain: WW domain-binding protein 4 (376 aa).

The segment at 11–42 adopts a Matrin-type zinc-finger fold; sequence KFCDYCKCWIADNRPSVEFHERGKNHKENVAK. The span at 94-107 shows a compositional bias: low complexity; that stretch reads ITPVTSTIPPTSTS. Disordered stretches follow at residues 94-128, 189-335, and 356-376; these read ITPVTSTIPPTSTSNQQKEKKEKKKRKKDPSKGRW, SRWE…EPKV, and FKKRRTENGKSRNLRQRGDDQ. 2 WW domains span residues 122 to 155 and 163 to 196; these read DPSKGRWVEGITSEGYHYYYDLISGASQWEKPEG and TAVKTVWVEGLSEDGFTYYYNTETGESRWEKPDD. Basic and acidic residues predominate over residues 189–198; sequence SRWEKPDDFI. Residues 203–215 show a composition bias toward polar residues; the sequence is DLPSSKVNENSLG. 2 stretches are compositionally biased toward basic and acidic residues: residues 218–229 and 243–257; these read DESKSSDSHSDS and ETEKPKIKFKEKNKN. Ser-220, Ser-227, and Ser-229 each carry phosphoserine. Ser-262 bears the Phosphoserine mark. The segment covering 298 to 309 has biased composition (basic and acidic residues); it reads QEIKQEVESHEE. Polar residues predominate over residues 316–326; it reads STENEYVSTSE. The interaction with SNRNP200 stretch occupies residues 357-375; the sequence is KKRRTENGKSRNLRQRGDD. Residues 361–376 are compositionally biased toward basic and acidic residues; it reads TENGKSRNLRQRGDDQ.

As to quaternary structure, component of the spliceosome B complex. Associated with U2 snRNPs. Binds splicing factors SNRPB, SNRPC and SF1. Interacts via the WW domains with the Pro-rich domains of KHDRBS1/SAM68. Interacts via the WW domains with the Pro-rich domains of WBP11. Interacts with SNRNP200.

Its subcellular location is the nucleus. The protein localises to the nucleus speckle. Its function is as follows. Involved in pre-mRNA splicing as a component of the spliceosome. May play a role in cross-intron bridging of U1 and U2 snRNPs in the mammalian A complex. The protein is WW domain-binding protein 4 (WBP4) of Homo sapiens (Human).